Consider the following 417-residue polypeptide: DnaJ protein homolog ANJ1 (417 aa).

Positions Ser-11–Asp-76 constitute a J domain. The segment at Gly-135–Lys-219 adopts a CR-type zinc-finger fold. CXXCXGXG motif repeat units lie at residues Cys-148 to Gly-155, Cys-164 to Gly-171, and Cys-191 to Gly-198. One copy of the CXXCXGXG motif; approximate repeat lies at Cys-207 to Lys-214. A disordered region spans residues Ile-384 to Gln-417. Cys-414 carries the post-translational modification Cysteine methyl ester. A lipid anchor (S-farnesyl cysteine) is attached at Cys-414. Residues Ala-415–Gln-417 constitute a propeptide, removed in mature form.

The protein resides in the membrane. Functionally, plays a continuous role in plant development probably in the structural organization of compartments. The polypeptide is DnaJ protein homolog ANJ1 (Atriplex nummularia (Old man saltbush)).